Consider the following 228-residue polypeptide: Probable septum site-determining protein MinC (228 aa).

The protein belongs to the MinC family. As to quaternary structure, interacts with MinD and FtsZ.

In terms of biological role, cell division inhibitor that blocks the formation of polar Z ring septums. Rapidly oscillates between the poles of the cell to destabilize FtsZ filaments that have formed before they mature into polar Z rings. Prevents FtsZ polymerization. In Bacillus cereus (strain B4264), this protein is Probable septum site-determining protein MinC.